We begin with the raw amino-acid sequence, 421 residues long: Exopolysaccharide production protein ExoF (421 aa).

The signal sequence occupies residues 1-31 (MQSNRRSGKSAGSRMVSCFTRLALLAALAAS).

The protein resides in the periplasm. It functions in the pathway glycan metabolism; exopolysaccharide biosynthesis. In terms of biological role, involved in succinoglycan (EPS I) synthesis. Needed for the addition of the first sugar (galactose) to the isoprenoid carrier. This Rhizobium meliloti (strain 1021) (Ensifer meliloti) protein is Exopolysaccharide production protein ExoF (exoF).